Here is a 79-residue protein sequence, read N- to C-terminus: uncharacterized protein (79 aa).

Residues 1–24 (MNKFLNLIGLAFVLVLCAFSCSNA) form the signal peptide. A LysM domain is found at 32 to 78 (SWHVAQKGYTCYDMATSCKVTLDQFMRTNKLDNNACKLVQIGRKYCC).

The protein localises to the secreted. This is an uncharacterized protein from Dictyostelium discoideum (Social amoeba).